The sequence spans 417 residues: Riboflavin biosynthesis protein RibBA (417 aa).

Residues Met1–Lys204 are DHBP synthase. Residues Arg28–Glu29, Asp33, Arg141–Thr145, and Glu165 contribute to the D-ribulose 5-phosphate site. Glu29 contributes to the Mg(2+) binding site. Mg(2+) is bound at residue His144. The tract at residues His205–Leu417 is GTP cyclohydrolase II. GTP is bound at residue Arg259–Glu263. Positions 264, 275, and 277 each coordinate Zn(2+). Residues Gln280, Glu303 to Arg305, and Thr325 contribute to the GTP site. Catalysis depends on Asp337, which acts as the Proton acceptor; for GTP cyclohydrolase activity. Arg339 (nucleophile; for GTP cyclohydrolase activity) is an active-site residue. 2 residues coordinate GTP: Thr360 and Lys365.

The protein in the N-terminal section; belongs to the DHBP synthase family. It in the C-terminal section; belongs to the GTP cyclohydrolase II family. Mg(2+) is required as a cofactor. The cofactor is Mn(2+). It depends on Zn(2+) as a cofactor.

It carries out the reaction D-ribulose 5-phosphate = (2S)-2-hydroxy-3-oxobutyl phosphate + formate + H(+). The enzyme catalyses GTP + 4 H2O = 2,5-diamino-6-hydroxy-4-(5-phosphoribosylamino)-pyrimidine + formate + 2 phosphate + 3 H(+). Its pathway is cofactor biosynthesis; riboflavin biosynthesis; 2-hydroxy-3-oxobutyl phosphate from D-ribulose 5-phosphate: step 1/1. It participates in cofactor biosynthesis; riboflavin biosynthesis; 5-amino-6-(D-ribitylamino)uracil from GTP: step 1/4. In terms of biological role, catalyzes the conversion of D-ribulose 5-phosphate to formate and 3,4-dihydroxy-2-butanone 4-phosphate. Its function is as follows. Catalyzes the conversion of GTP to 2,5-diamino-6-ribosylamino-4(3H)-pyrimidinone 5'-phosphate (DARP), formate and pyrophosphate. This chain is Riboflavin biosynthesis protein RibBA, found in Rhodococcus jostii (strain RHA1).